Consider the following 717-residue polypeptide: MALYRSDPYSIMDDQLFSNISIFDMDNDLYDMDKLLSSSTIQSDLEKIEDMESVFQDYDLEEDMKPEIRNIDCMWPAMSSCLTSGNGNGIESGNSAASSYSETGAVSLAMVSGSTNLYSAYQRSQTTDNTQSNQQHVVNSAENMPVIIKKELADLDYTVCQKRLRLSGGDKKSQIQDEVHLIPPGGSLLRKRNNQDIIRKSGELSGSDSIKYQRPDTPHSLTDEVAASEFRHNVDLRACVMGSNNISLTGNDSDVNYIKQISRELQNTGKDPLPVRYIPPINDVLDVLNQHSNSTGGQQQLNQQQLDEQQQAIDIATGRNTVDSPPTTGSDSDSDDGEPLNFDLRHHRTSKSGSNASITTNNNNSNNKNNKLKNNSNGMLHMMHITDHSYTRCNDMVDDGPNLETPSDSDEEIDVVSYTDKKLPTNPSCHLMGALQFQMAHKISIDHMKQKPRYNNFNLPYTPASSSPVKSVANSRYPSPSSTPYQNCSSASPSYSPLSVDSSNVSSSSSSSSSQSSFTTSSSNKGRKRSSLKDPGLLISSSSVYLPGVNNKVTHSSMMSKKSRGKKVVGTSSGNTSPISSGQDVDAMDRNWQRRSGGIATSTSSNSSVHRKDFVLGFDEADTIEKRNQHNDMERQRRIGLKNLFEALKKQIPTIRDKERAPKVNILREAAKLCIQLTQEEKELSMQRQLLSLQLKQRQDTLASYQMELNESRSVSG.

Residue threonine 217 is modified to Phosphothreonine. The residue at position 220 (serine 220) is a Phosphoserine. Disordered stretches follow at residues 288–376 (LNQH…KNNS), 462–535 (TPAS…LKDP), and 555–584 (HSSM…SGQD). Residues 298 to 311 (QQQLNQQQLDEQQQ) are compositionally biased toward low complexity. Positions 351-360 (KSGSNASITT) are enriched in polar residues. Over residues 361–376 (NNNNSNNKNNKLKNNS) the composition is skewed to low complexity. Polar residues predominate over residues 462–488 (TPASSSPVKSVANSRYPSPSSTPYQNC). Low complexity predominate over residues 489-523 (SSASPSYSPLSVDSSNVSSSSSSSSSQSSFTTSSS). The tract at residues 625 to 638 (EKRNQHNDMERQRR) is basic motif. The bHLH domain occupies 625 to 677 (EKRNQHNDMERQRRIGLKNLFEALKKQIPTIRDKERAPKVNILREAAKLCIQL). A helix-loop-helix motif region spans residues 639 to 677 (IGLKNLFEALKKQIPTIRDKERAPKVNILREAAKLCIQL).

The protein belongs to the Myc transcription factor family. In terms of assembly, efficient DNA binding requires dimerization with another bHLH protein. Binds DNA as a heterodimer with Max. Interacts with ago. Interacts with lid. Part of a complex containing lid, Myc and ash2. Component of a complex with pont and rept. Interacts with puf. Interacts with wh/wuho; the interaction may be mediated by mei-P26 and may be involved in the regulation of ribosome biogenesis. Probably targeted for ubiquitination by the SFC ubiquitin ligase complex member ago, leading to its proteasomal degradation. As to expression, low levels detected throughout embryo before cellular blastoderm formation, particularly concentrated in pole plasm. Zygotic expression detected during cellular blastoderm stage in endodermal anlagen of anterior and posterior midgut at both poles. After gastrulation, expression detected in invaginating ventral furrow of mesoderm. Continued expression in anterior and posterior midgut and mesoderm during germband extension. During late germ-band retraction, expression remains detectable in fusing midgut and presumed developing somatic musculature.

The protein localises to the nucleus. It is found in the nucleolus. It localises to the cytoplasm. Its function is as follows. Participates in the regulation of gene transcription. Binds DNA in a non-specific manner, yet also specifically recognizes the core sequence CAC[GA]TG. Seems to activate the transcription of growth-related genes; required for cellular proliferation and growth. Functions in the TORC2-mediated regulation of cell growth, acting downstream of the TORC2 complex. Inhibits the demethylase activity of Lid. Activates transcription of mbm. Has a role in ribosome biogenesis and endoreplication in fat body cells by activating the transcription of LTV1. Able to induce the SCF E3 ubiquitin-protein ligase member archipelago (ago) which functions in its degradation. It may therefore create a negative feedback loop with ago that is regulated by the ubiquitin hydrolase puf. In dopaminergic neurons, regulates dopamine levels by binding to the E-box (E1) of the dopamine decarboxylase Ddc promoter and thereby inhibiting its transcription. This regulation is required to suppress male-male courtship. Involved in the acs and insulin signaling mediated non-cell-autonomous induction of amino acid release into the hemolymph following the cytoplasmic purge response to intestinal bacterial infection; required for efficient recovery of enterocyte thickness. The chain is Myc proto-oncogene protein from Drosophila melanogaster (Fruit fly).